Consider the following 500-residue polypeptide: NAD(P)H-quinone oxidoreductase chain 4, chloroplastic (500 aa).

The next 15 membrane-spanning stretches (helical) occupy residues 3–23, 37–57, 87–107, 113–130, 134–154, 167–187, 208–228, 242–262, 272–292, 305–325, 330–350, 364–384, 386–406, 411–431, and 462–482; these read FFPWLTIIVILPIFAGSIILF, ICICILELLLTTYAFCYHFQL, IGPILLTGFITTLATLAAWPV, LFHFLMLAMYSGQIGLFA, LLLFFIMWELELIPVYLLLSM, FILYTAGGSVFLLMGVLGVGL, ALEIILYIGFFIAFAVKSPII, HYSTCMLLAGILLKMGAYGLI, AHSIFSPWLVIVGTIQIIYAA, IAYSSVSHMGFILIGIGSIND, GAILQIVSHGFIGAALFFLAG, MGGIAIPMPKIFTMFSSFSMA, LALPGMSGFVAEFIVFFGIIT, LLISKLGITFVMAIGIILTPI, and LFVSIAIFIPVIGIGMYPDFV.

It belongs to the complex I subunit 4 family.

The protein localises to the plastid. It is found in the chloroplast thylakoid membrane. It catalyses the reaction a plastoquinone + NADH + (n+1) H(+)(in) = a plastoquinol + NAD(+) + n H(+)(out). It carries out the reaction a plastoquinone + NADPH + (n+1) H(+)(in) = a plastoquinol + NADP(+) + n H(+)(out). The polypeptide is NAD(P)H-quinone oxidoreductase chain 4, chloroplastic (Daucus carota (Wild carrot)).